Here is a 269-residue protein sequence, read N- to C-terminus: Ubiquinone/menaquinone biosynthesis C-methyltransferase UbiE (269 aa).

S-adenosyl-L-methionine is bound by residues Thr-92, Asp-113, and 141 to 142 (NA).

The protein belongs to the class I-like SAM-binding methyltransferase superfamily. MenG/UbiE family.

The enzyme catalyses a 2-demethylmenaquinol + S-adenosyl-L-methionine = a menaquinol + S-adenosyl-L-homocysteine + H(+). It catalyses the reaction a 2-methoxy-6-(all-trans-polyprenyl)benzene-1,4-diol + S-adenosyl-L-methionine = a 5-methoxy-2-methyl-3-(all-trans-polyprenyl)benzene-1,4-diol + S-adenosyl-L-homocysteine + H(+). It functions in the pathway quinol/quinone metabolism; menaquinone biosynthesis; menaquinol from 1,4-dihydroxy-2-naphthoate: step 2/2. The protein operates within cofactor biosynthesis; ubiquinone biosynthesis. Methyltransferase required for the conversion of demethylmenaquinol (DMKH2) to menaquinol (MKH2) and the conversion of 2-polyprenyl-6-methoxy-1,4-benzoquinol (DDMQH2) to 2-polyprenyl-3-methyl-6-methoxy-1,4-benzoquinol (DMQH2). The polypeptide is Ubiquinone/menaquinone biosynthesis C-methyltransferase UbiE (Brucella suis biovar 1 (strain 1330)).